We begin with the raw amino-acid sequence, 185 residues long: Putative manganese efflux pump MntP (185 aa).

6 helical membrane-spanning segments follow: residues 8–28 (LFVI…SIGL), 42–62 (ISFG…GVLF), 66–86 (ILVI…ILML), 103–123 (MYFI…FTVL), 137–157 (IFIG…SGYL), and 165–185 (KYAN…MIFM).

The protein belongs to the MntP (TC 9.B.29) family.

The protein resides in the cell membrane. In terms of biological role, probably functions as a manganese efflux pump. The sequence is that of Putative manganese efflux pump MntP from Clostridium novyi (strain NT).